Reading from the N-terminus, the 632-residue chain is Fem-3 mRNA-binding factor 2 (632 aa).

Residues 1–11 (MDQSKMRRTNQ) show a composition bias toward basic residues. Positions 1-37 (MDQSKMRRTNQFRKTSQKPPSTGIDSYPTPAQSPMAQ) are disordered. The span at 12-35 (FRKTSQKPPSTGIDSYPTPAQSPM) shows a compositional bias: polar residues. A PUM-HD domain is found at 162–566 (TRSNNVLPTW…KMIETLANLR (405 aa)). 8 Pumilio repeats span residues 187 to 225 (EVLDSGDLMKFAVDKTGCQFLEKAVKGSLTSYQKFQLFE), 226 to 264 (QVIGRKDDFLKLSTNIFGNYLVQSVIGISLATNDDGYTK), 271 to 307 (NFISSQMTDMCLDKFACRVIQSSLQNMDLSLACKLVQ), 308 to 332 (ALPRDARLIAICVDQNANHVIQKVV), 345 to 384 (DFVATPEHLRQICSDKYGCRVVQTIIEKLTADSMNVDLTS), 400 to 436 (SVTNRCQELATNEYANYIIQHIVSNDDLAVYRECIIE), 438 to 473 (CLMRNLLSLSQEKFASHVVEKAFLHAPLELLAEMMD), and 484 to 521 (DTGKDALDIMMFHQFGNYVVQCMLTICCDAVSGRRQTK). Residues 609 to 632 (MLEPRSNKSSVSVKFSSSGSHGDD) form a disordered region. Positions 615–632 (NKSSVSVKFSSSGSHGDD) are enriched in low complexity.

Interacts (via C-terminus) with gld-3 isoform A in an RNA-independent manner. Interacts with dlc-1, and is required for the localization of fbf-2 to P granules. Interacts (via RNA-binding domain) with lst-1, probably displaces bound auto-inhibitory C-terminal tail and alters its RNA-binding affinity. In terms of tissue distribution, expressed specifically in the germline (at protein level).

It localises to the cytoplasm. The protein resides in the cytoplasmic granule. RNA-binding protein that binds to the consensus sequence 5'-UGUGCCAUA-3' in mRNA 3'-UTRs. Involved in the control of stem cells and sex determination in the C.elegans hermaphrodite germline. May also play a role in the hermaphrodite germline proliferation and oogenesis. By binding to the 3'-UTR, represses phosphatase lip-1 expression in the distal part of the germline mitotic zone. Binds specifically to the regulatory region of fem-3 3'-UTR and mediates the sperm/oocyte switch. Negatively regulates gld-3 expression possibly by directly binding to two sites within the gld-3 isoform b 3'-UTR. Suppresses germline tumor formation by preventing the dedifferentiation of secondary spermatocytes. C-terminal disordered region probably auto-inhibits RNA binding; auto-inhibition may be reversed by interaction with lst-1. This Caenorhabditis elegans protein is Fem-3 mRNA-binding factor 2.